The chain runs to 1625 residues: E3 ubiquitin-protein ligase KEG (1625 aa).

The RING-type zinc-finger motif lies at 10–56 (CSVCHTRYNEDERVPLLLQCGHGFCKDCLSKMFSTSSDTTLTCPRCR). A compositionally biased stretch (acidic residues) spans 91–106 (YTDDEDDDDEEDGSDE). The tract at residues 91–110 (YTDDEDDDDEEDGSDEDGAR) is disordered. Residues 141–427 (RQIGEESSSG…TFNAMLATFL (287 aa)) form the Protein kinase domain. ATP-binding positions include 147–155 (SSSGGFGGV) and Lys-176. 11 ANK repeats span residues 467 to 496 (DNPN…AGGG), 510 to 540 (DGQS…NVDI), 544 to 573 (DGDP…NVRS), 579 to 608 (SGPS…DPNA), 612 to 641 (EGET…SRSM), 647 to 676 (KCLT…PEEI), 685 to 720 (PVGT…DPTA), 725 to 754 (HGRT…NANI), 758 to 787 (HNTI…DCNI), 791 to 826 (EGDN…AVDV), and 832 to 863 (KTVR…HLSP).

As to quaternary structure, interacts with ABI5 and EDR1. Autophosphotylated and autoubiquitinated in vitro. Post-translationally, phosphorylation enhances self-ubiquitination. In terms of processing, autoubiquitinated in response to abscisic acid (ABA) and subsequently targeted to proteolysis. Expressed in all tissues of young seedlings. In flowering plants, only detected in the youngest part of the stem, anthers and the receptacle of immature siliques. Not found in mature leave, older parts of the stem, flower parts other than anthers or mature siliques.

It is found in the golgi apparatus. The protein localises to the trans-Golgi network. The protein resides in the early endosome. It carries out the reaction L-seryl-[protein] + ATP = O-phospho-L-seryl-[protein] + ADP + H(+). It catalyses the reaction L-threonyl-[protein] + ATP = O-phospho-L-threonyl-[protein] + ADP + H(+). The enzyme catalyses S-ubiquitinyl-[E2 ubiquitin-conjugating enzyme]-L-cysteine + [acceptor protein]-L-lysine = [E2 ubiquitin-conjugating enzyme]-L-cysteine + N(6)-ubiquitinyl-[acceptor protein]-L-lysine.. Its pathway is protein modification; protein ubiquitination. Mediates E2-dependent protein ubiquitination. Acts as a negative regulator of abscisic acid signaling. Required for ABI5 degradation, by mediating its ubiquitination. Together with EDR1, may regulate endocytic trafficking and/or the formation of signaling complexes on trans-Golgi network (TGN)/ early endosome (EE) vesicles during stress responses. This is E3 ubiquitin-protein ligase KEG (KEG) from Arabidopsis thaliana (Mouse-ear cress).